A 271-amino-acid polypeptide reads, in one-letter code: Putative phosphoenolpyruvate synthase regulatory protein (271 aa).

Residue Gly-152–Thr-159 participates in ADP binding.

The protein belongs to the pyruvate, phosphate/water dikinase regulatory protein family. PSRP subfamily.

The enzyme catalyses [pyruvate, water dikinase] + ADP = [pyruvate, water dikinase]-phosphate + AMP + H(+). The catalysed reaction is [pyruvate, water dikinase]-phosphate + phosphate + H(+) = [pyruvate, water dikinase] + diphosphate. Bifunctional serine/threonine kinase and phosphorylase involved in the regulation of the phosphoenolpyruvate synthase (PEPS) by catalyzing its phosphorylation/dephosphorylation. In Thiocapsa roseopersicina, this protein is Putative phosphoenolpyruvate synthase regulatory protein.